The following is a 140-amino-acid chain: Putative nickel-responsive regulator (140 aa).

Ni(2+) is bound by residues His76, His87, His89, and Cys95.

This sequence belongs to the transcriptional regulatory CopG/NikR family. Ni(2+) is required as a cofactor.

In terms of biological role, transcriptional regulator. In Rhodopseudomonas palustris (strain BisB5), this protein is Putative nickel-responsive regulator.